Here is an 856-residue protein sequence, read N- to C-terminus: Leucine--tRNA ligase (856 aa).

A 'HIGH' region motif is present at residues proline 42–histidine 52. The 'KMSKS' region motif lies at lysine 615 to serine 619. Residue lysine 618 participates in ATP binding.

It belongs to the class-I aminoacyl-tRNA synthetase family.

Its subcellular location is the cytoplasm. The enzyme catalyses tRNA(Leu) + L-leucine + ATP = L-leucyl-tRNA(Leu) + AMP + diphosphate. This is Leucine--tRNA ligase from Chromohalobacter salexigens (strain ATCC BAA-138 / DSM 3043 / CIP 106854 / NCIMB 13768 / 1H11).